A 450-amino-acid polypeptide reads, in one-letter code: Tubulin alpha-3E chain (450 aa).

The short motif at 1 to 4 (MREC) is the MREC motif element. Q11 contacts GTP. K40 bears the N6-acetyllysine mark. GTP-binding residues include E71, S140, G144, T145, T179, N206, and N228. Mg(2+) is bound at residue E71. The active site involves E254. 3'-nitrotyrosine is present on Y282. S439 carries the phosphoserine modification. At Y450 the chain carries 3'-nitrotyrosine.

It belongs to the tubulin family. As to quaternary structure, dimer of alpha and beta chains. A typical microtubule is a hollow water-filled tube with an outer diameter of 25 nm and an inner diameter of 15 nM. Alpha-beta heterodimers associate head-to-tail to form protofilaments running lengthwise along the microtubule wall with the beta-tubulin subunit facing the microtubule plus end conferring a structural polarity. Microtubules usually have 13 protofilaments but different protofilament numbers can be found in some organisms and specialized cells. Mg(2+) serves as cofactor. In terms of processing, some glutamate residues at the C-terminus are polyglutamylated, resulting in polyglutamate chains on the gamma-carboxyl group. Polyglutamylation plays a key role in microtubule severing by spastin (SPAST). SPAST preferentially recognizes and acts on microtubules decorated with short polyglutamate tails: severing activity by SPAST increases as the number of glutamates per tubulin rises from one to eight, but decreases beyond this glutamylation threshold. Glutamylation is also involved in cilia motility. Post-translationally, some glutamate residues at the C-terminus are monoglycylated but not polyglycylated due to the absence of functional TTLL10 in human. Monoglycylation is mainly limited to tubulin incorporated into cilia and flagella axonemes, which is required for their stability and maintenance. Flagella glycylation controls sperm motility. Both polyglutamylation and monoglycylation can coexist on the same protein on adjacent residues, and lowering glycylation levels increases polyglutamylation, and reciprocally. Acetylation of alpha chains at Lys-40 is located inside the microtubule lumen. This modification has been correlated with increased microtubule stability, intracellular transport and ciliary assembly. In terms of processing, methylation of alpha chains at Lys-40 is found in mitotic microtubules and is required for normal mitosis and cytokinesis contributing to genomic stability. Post-translationally, nitration of Tyr-450 is irreversible and interferes with normal dynein intracellular distribution. Undergoes a tyrosination/detyrosination cycle, the cyclic removal and re-addition of a C-terminal tyrosine residue by the enzymes tubulin tyrosine carboxypeptidase (MATCAP1/KIAA0895L, VASH1 or VASH2) and tubulin tyrosine ligase (TTL), respectively. In terms of processing, tyrosination promotes microtubule interaction with CAP-Gly domain-containing proteins such as CLIP1, CLIP2 and DCTN1. Tyrosination regulates the initiation of dynein-dynactin motility via interaction with DCTN1, which brings the dynein-dynactin complex into contact with microtubules. In neurons, tyrosinated tubulins mediate the initiation of retrograde vesicle transport. Post-translationally, detyrosination is involved in metaphase plate congression by guiding chromosomes during mitosis: detyrosination promotes interaction with CENPE, promoting pole-proximal transport of chromosomes toward the equator. Detyrosination increases microtubules-dependent mechanotransduction in dystrophic cardiac and skeletal muscle. In cardiomyocytes, detyrosinated microtubules are required to resist to contractile compression during contraction: detyrosination promotes association with desmin (DES) at force-generating sarcomeres, leading to buckled microtubules and mechanical resistance to contraction.

It is found in the cytoplasm. The protein localises to the cytoskeleton. It carries out the reaction GTP + H2O = GDP + phosphate + H(+). Tubulin is the major constituent of microtubules, a cylinder consisting of laterally associated linear protofilaments composed of alpha- and beta-tubulin heterodimers. Microtubules grow by the addition of GTP-tubulin dimers to the microtubule end, where a stabilizing cap forms. Below the cap, tubulin dimers are in GDP-bound state, owing to GTPase activity of alpha-tubulin. This Homo sapiens (Human) protein is Tubulin alpha-3E chain (TUBA3E).